The sequence spans 188 residues: dCTP deaminase (188 aa).

DCTP-binding positions include 111–116, 135–137, glutamine 156, tyrosine 170, and glutamine 180; these read KSTYAR and TLE. Glutamate 137 acts as the Proton donor/acceptor in catalysis.

Belongs to the dCTP deaminase family. Homotrimer.

It catalyses the reaction dCTP + H2O + H(+) = dUTP + NH4(+). The protein operates within pyrimidine metabolism; dUMP biosynthesis; dUMP from dCTP (dUTP route): step 1/2. Its function is as follows. Catalyzes the deamination of dCTP to dUTP. The protein is dCTP deaminase of Cupriavidus taiwanensis (strain DSM 17343 / BCRC 17206 / CCUG 44338 / CIP 107171 / LMG 19424 / R1) (Ralstonia taiwanensis (strain LMG 19424)).